A 120-amino-acid polypeptide reads, in one-letter code: U15-barytoxin-Tl1c (120 aa).

A signal peptide spans 1–16 (MKLFMVLVASFAFAVA). 4 disulfide bridges follow: cysteine 55-cysteine 73, cysteine 66-cysteine 79, cysteine 70-cysteine 118, and cysteine 72-cysteine 89.

Belongs to the neurotoxin 03 (Tx2) family. 03 subfamily. Expressed by the venom gland.

The protein localises to the secreted. Its function is as follows. Ion channel inhibitor. In Trittame loki (Brush-footed trapdoor spider), this protein is U15-barytoxin-Tl1c.